A 458-amino-acid chain; its full sequence is KAT8 regulatory NSL complex subunit 2 (458 aa).

Lys-78 participates in a covalent cross-link: Glycyl lysine isopeptide (Lys-Gly) (interchain with G-Cter in SUMO2). The disordered stretch occupies residues 126–182 (ELGSQTPESSRSEASRILDEDSWSDGDQEPITVDQTWRGDPDSEADSIDSDQEDPLK). A Phosphothreonine modification is found at Thr-131. Basic and acidic residues predominate over residues 135–144 (SRSEASRILD). Phosphoserine occurs at positions 147, 149, 168, 172, and 175. The segment covering 167-178 (DSEADSIDSDQE) has biased composition (acidic residues). The interval 308-364 (DVRCSNQSLPMTRHCLTHICQDTNQVLFKCCQGSEEVPCNKPVPVSLSEDPCCPLHF) is required for interaction with other NSL complex members. The interval 419 to 458 (QMAGDGCRSQGPRNSEKAPAPLPQSGIATANGKPEPTSVS) is disordered.

Component of the NSL complex at least composed of KAT8/MOF, KANSL1, KANSL2, KANSL3, MCRS1, PHF20, OGT1/OGT, WDR5 and HCFC1.

It is found in the nucleus. The protein resides in the mitochondrion. In terms of biological role, non-catalytic component of the NSL histone acetyltransferase complex, a multiprotein complex that mediates histone H4 acetylation at 'Lys-5'- and 'Lys-8' (H4K5ac and H4K8ac) at transcription start sites and promotes transcription initiation. Required for NSL complex stability and for transcription of intraciliary transport genes in both ciliated and non-ciliated cells by regulating histone H4 acetylation at 'Lys-5'- and 'Lys-12' (H4K5ac and H4K12ac). This is necessary for cilium assembly in ciliated cells and for organization of the microtubule cytoskeleton in non-ciliated cells. Required within the NSL complex to maintain nuclear architecture stability by promoting KAT8-mediated acetylation of lamin LMNA. The sequence is that of KAT8 regulatory NSL complex subunit 2 (KANSL2) from Bos taurus (Bovine).